An 81-amino-acid chain; its full sequence is Photosystem I iron-sulfur center (81 aa).

2 4Fe-4S ferredoxin-type domains span residues 2–31 (SHIVKIYDTCIGCTQCVRACPLDVLEMVPW) and 39–68 (MASAPRTEDCVGCKRCESACPTDFLSVRVY). Cys11, Cys14, Cys17, Cys21, Cys48, Cys51, Cys54, and Cys58 together coordinate [4Fe-4S] cluster.

As to quaternary structure, the eukaryotic PSI reaction center is composed of at least 11 subunits. The cofactor is [4Fe-4S] cluster.

The protein localises to the plastid. The protein resides in the chloroplast thylakoid membrane. It catalyses the reaction reduced [plastocyanin] + hnu + oxidized [2Fe-2S]-[ferredoxin] = oxidized [plastocyanin] + reduced [2Fe-2S]-[ferredoxin]. Its function is as follows. Apoprotein for the two 4Fe-4S centers FA and FB of photosystem I (PSI); essential for photochemical activity. FB is the terminal electron acceptor of PSI, donating electrons to ferredoxin. The C-terminus interacts with PsaA/B/D and helps assemble the protein into the PSI complex. Required for binding of PsaD and PsaE to PSI. PSI is a plastocyanin/cytochrome c6-ferredoxin oxidoreductase, converting photonic excitation into a charge separation, which transfers an electron from the donor P700 chlorophyll pair to the spectroscopically characterized acceptors A0, A1, FX, FA and FB in turn. In Stigeoclonium helveticum (Green alga), this protein is Photosystem I iron-sulfur center.